A 557-amino-acid polypeptide reads, in one-letter code: MVSKLTSLQQELLSALLSSGVTKEVLVQALEELLPSPNFGVKLETLPLSPGSGAEPDTKPVFHTLTNGHAKGRLSGDEGSEDGDDYDTPPILKELQALNTEEAAEQRAEVDRMLSEDPWRAAKMIKGYMQQHNIPQREVVDVTGLNQSHLSQHLNKGTPMKTQKRAALYTWYVRKQREILRQFNQTVQSSGNMTDKSSQDQLLFLFPEFSQQSQGPGQSDDACSEPTNKKMRRNRFKWGPASQQILYQAYDRQKNPSKEEREALVEECNRAECLQRGVSPSKAHGLGSNLVTEVRVYNWFANRRKEEAFRQKLAMDAYSSNQTHSLNPLLSHGSPHHQPSSSPPNKLSGVRYSQQGNNEVTSSSTISHHGNSAMVTSQSVLQQVSPASLDPGHNLLSPDGKMISVSGGGLPPVSTLTNIHSLSHHNPQQSQNLIMTPLSGVMAIAQSLNTSQAQSVPVINSVAGSLAALQPVQFSQQLHSPHQQPLMQQSPGSHMAQQPFMAAVTQLQNSHMYAHKQEPPQYSHTSRFPSAMVVTDTSSISTLTNMSSSKQCPLQAW.

Positions 1–31 are dimerization; it reads MVSKLTSLQQELLSALLSSGVTKEVLVQALE. The HNF-p1 domain occupies 1 to 32; sequence MVSKLTSLQQELLSALLSSGVTKEVLVQALEE. A phosphoserine mark is found at serine 49, serine 52, serine 75, and serine 80. A disordered region spans residues 64 to 85; the sequence is TLTNGHAKGRLSGDEGSEDGDD. The region spanning 93 to 188 is the POU-specific atypical domain; it reads KELQALNTEE…ILRQFNQTVQ (96 aa). The homeobox; HNF1-type DNA-binding region spans 231-311; it reads MRRNRFKWGP…NRRKEEAFRQ (81 aa). The tract at residues 324–370 is disordered; that stretch reads HSLNPLLSHGSPHHQPSSSPPNKLSGVRYSQQGNNEVTSSSTISHHG. The segment covering 328 to 344 has biased composition (low complexity); the sequence is PLLSHGSPHHQPSSSPP. A compositionally biased stretch (polar residues) spans 351–370; sequence RYSQQGNNEVTSSSTISHHG.

Belongs to the HNF1 homeobox family. As to quaternary structure, binds DNA as a dimer. Can form homodimer or heterodimer with HNF1-alpha. Interacts (via HNF-p1 domain) with PCBD1; the interaction increases its transactivation activity.

The protein localises to the nucleus. Functionally, transcription factor that binds to the inverted palindrome 5'-GTTAATNATTAAC-3'. Binds to the FPC element in the cAMP regulatory unit of the PLAU gene. Transcriptional activity is increased by coactivator PCBD1. This Pongo abelii (Sumatran orangutan) protein is Hepatocyte nuclear factor 1-beta (HNF1B).